The primary structure comprises 238 residues: Zinc import ATP-binding protein ZnuC (238 aa).

Positions 5–220 (IQLNNISVNF…SEFIAIFGNI (216 aa)) constitute an ABC transporter domain. ATP is bound at residue 37–44 (GPNGAGKS).

Belongs to the ABC transporter superfamily. Zinc importer (TC 3.A.1.15.5) family. As to quaternary structure, the complex is composed of two ATP-binding proteins (ZnuC), two transmembrane proteins (ZnuB) and a solute-binding protein (ZnuA).

It localises to the cell membrane. The catalysed reaction is Zn(2+)(out) + ATP(in) + H2O(in) = Zn(2+)(in) + ADP(in) + phosphate(in) + H(+)(in). In terms of biological role, part of the ABC transporter complex ZnuABC involved in zinc import. Responsible for energy coupling to the transport system. In Buchnera aphidicola subsp. Baizongia pistaciae (strain Bp), this protein is Zinc import ATP-binding protein ZnuC.